The chain runs to 343 residues: GTPase Obg (343 aa).

In terms of domain architecture, Obg spans 1-159 (MQFIDHATIC…RQLRLELKLL (159 aa)). The 169-residue stretch at 160–328 (AEVGLIGLPN…LLRLVWQWLD (169 aa)) folds into the OBG-type G domain. GTP contacts are provided by residues 166–173 (GLPNAGKS), 191–195 (FTTLV), 213–216 (DIPG), 280–283 (NKID), and 309–311 (SSA). Mg(2+) is bound by residues Ser173 and Thr193.

This sequence belongs to the TRAFAC class OBG-HflX-like GTPase superfamily. OBG GTPase family. Monomer. Requires Mg(2+) as cofactor.

The protein localises to the cytoplasm. An essential GTPase which binds GTP, GDP and possibly (p)ppGpp with moderate affinity, with high nucleotide exchange rates and a fairly low GTP hydrolysis rate. Plays a role in control of the cell cycle, stress response, ribosome biogenesis and in those bacteria that undergo differentiation, in morphogenesis control. The protein is GTPase Obg of Synechococcus elongatus (strain ATCC 33912 / PCC 7942 / FACHB-805) (Anacystis nidulans R2).